An 85-amino-acid polypeptide reads, in one-letter code: Large ribosomal subunit protein bL27 (85 aa).

The interval 1 to 24 (MAHKKGQGSSRNGRDSNAQRRGVK) is disordered.

This sequence belongs to the bacterial ribosomal protein bL27 family.

This Syntrophus aciditrophicus (strain SB) protein is Large ribosomal subunit protein bL27.